Consider the following 690-residue polypeptide: Dual specificity protein kinase lkh1 (690 aa).

Positions 39–70 (PNLPPPFSVHQLQSFVPPQPPSSSSPSTTGTV) are disordered. The 321-residue stretch at 362–682 (YTVVRLLGHG…AKEALWHPFF (321 aa)) folds into the Protein kinase domain. Residues 368–376 (LGHGTFGKV) and lysine 391 contribute to the ATP site. Aspartate 488 (proton acceptor) is an active-site residue.

The protein belongs to the protein kinase superfamily. CMGC Ser/Thr protein kinase family. Lammer subfamily. Autophosphorylates on all three types of residues.

It carries out the reaction L-seryl-[protein] + ATP = O-phospho-L-seryl-[protein] + ADP + H(+). The catalysed reaction is L-threonyl-[protein] + ATP = O-phospho-L-threonyl-[protein] + ADP + H(+). The enzyme catalyses L-tyrosyl-[protein] + ATP = O-phospho-L-tyrosyl-[protein] + ADP + H(+). In terms of biological role, protein kinase that may act as a negative regulator of filamentous growth and flocculation. Appears to have a role in normal cell wall and septum formation and in cell separation. May have antagonistic function in the regulation of beta-glucan distribution between the sites for cell wall and septum assembly. The chain is Dual specificity protein kinase lkh1 (lkh1) from Schizosaccharomyces pombe (strain 972 / ATCC 24843) (Fission yeast).